An 83-amino-acid polypeptide reads, in one-letter code: Cytochrome b559 subunit alpha (83 aa).

A helical membrane pass occupies residues 21 to 35 (VIHSITIPSLFIAGW). Histidine 23 is a binding site for heme.

It belongs to the PsbE/PsbF family. In terms of assembly, heterodimer of an alpha subunit and a beta subunit. PSII is composed of 1 copy each of membrane proteins PsbA, PsbB, PsbC, PsbD, PsbE, PsbF, PsbH, PsbI, PsbJ, PsbK, PsbL, PsbM, PsbT, PsbX, PsbY, PsbZ, Psb30/Ycf12, at least 3 peripheral proteins of the oxygen-evolving complex and a large number of cofactors. It forms dimeric complexes. Heme b is required as a cofactor.

The protein resides in the plastid. The protein localises to the chloroplast thylakoid membrane. Functionally, this b-type cytochrome is tightly associated with the reaction center of photosystem II (PSII). PSII is a light-driven water:plastoquinone oxidoreductase that uses light energy to abstract electrons from H(2)O, generating O(2) and a proton gradient subsequently used for ATP formation. It consists of a core antenna complex that captures photons, and an electron transfer chain that converts photonic excitation into a charge separation. The polypeptide is Cytochrome b559 subunit alpha (Chlorella vulgaris (Green alga)).